A 316-amino-acid chain; its full sequence is Acetaldehyde dehydrogenase (316 aa).

11-14 (SGNI) provides a ligand contact to NAD(+). C131 serves as the catalytic Acyl-thioester intermediate. NAD(+)-binding positions include 162 to 170 (SAGPGTRAN) and N289.

It belongs to the acetaldehyde dehydrogenase family. Interacts with MhpE.

It carries out the reaction acetaldehyde + NAD(+) + CoA = acetyl-CoA + NADH + H(+). It participates in aromatic compound metabolism; 3-phenylpropanoate degradation. In terms of biological role, catalyzes the conversion of acetaldehyde to acetyl-CoA, using NAD(+) and coenzyme A. Is the final enzyme in the meta-cleavage pathway for the degradation of aromatic compounds. The sequence is that of Acetaldehyde dehydrogenase from Escherichia coli O157:H7.